The following is a 543-amino-acid chain: CTP synthase (543 aa).

Residues 1–267 form an amidoligase domain region; the sequence is MKQTKYIFVT…LSPIAEILDL (267 aa). Ser15 is a binding site for CTP. Ser15 is a UTP binding site. Residues 16 to 21 and Asp73 each bind ATP; that span reads SLGKGI. Mg(2+) is bound by residues Asp73 and Glu141. Residues 148-150, 188-193, and Lys224 contribute to the CTP site; these read DIE and KTKPTQ. UTP contacts are provided by residues 188-193 and Lys224; that span reads KTKPTQ. The 252-residue stretch at 292-543 folds into the Glutamine amidotransferase type-1 domain; it reads KIAFVGKYVD…IKAAINYEDN (252 aa). Residue Gly354 coordinates L-glutamine. Cys381 acts as the Nucleophile; for glutamine hydrolysis in catalysis. L-glutamine contacts are provided by residues 382-385, Glu405, and Arg473; that span reads LGMQ. Residues His516 and Glu518 contribute to the active site.

The protein belongs to the CTP synthase family. In terms of assembly, homotetramer.

It catalyses the reaction UTP + L-glutamine + ATP + H2O = CTP + L-glutamate + ADP + phosphate + 2 H(+). It carries out the reaction L-glutamine + H2O = L-glutamate + NH4(+). The enzyme catalyses UTP + NH4(+) + ATP = CTP + ADP + phosphate + 2 H(+). It functions in the pathway pyrimidine metabolism; CTP biosynthesis via de novo pathway; CTP from UDP: step 2/2. Its activity is regulated as follows. Allosterically activated by GTP, when glutamine is the substrate; GTP has no effect on the reaction when ammonia is the substrate. The allosteric effector GTP functions by stabilizing the protein conformation that binds the tetrahedral intermediate(s) formed during glutamine hydrolysis. Inhibited by the product CTP, via allosteric rather than competitive inhibition. Catalyzes the ATP-dependent amination of UTP to CTP with either L-glutamine or ammonia as the source of nitrogen. Regulates intracellular CTP levels through interactions with the four ribonucleotide triphosphates. The sequence is that of CTP synthase from Campylobacter jejuni subsp. jejuni serotype O:6 (strain 81116 / NCTC 11828).